Consider the following 3969-residue polypeptide: Histone-lysine N-methyltransferase 2A (3969 aa).

3 disordered regions span residues Met1–Val108, Val132–Leu253, and Arg301–Pro352. The short motif at Arg6 to Arg25 is the Menin-binding motif (MBM) element. The segment covering Thr15–Gly29 has biased composition (gly residues). Composition is skewed to low complexity over residues Ala59 to Ser69 and Gly77 to Ala104. The Integrase domain-binding motif 1 (IBM1) signature appears at Gly123–Gly134. 2 positions are modified to phosphoserine; by CK2: Ser136 and Ser142. The Integrase domain-binding motif 2 (IBM2) motif lies at Gln147–Gly152. Ser153 is subject to Phosphoserine. Positions Lys169–Arg180 form a DNA-binding region, a.T hook 1. Position 197 is a phosphoserine (Ser197). 2 stretches are compositionally biased toward basic and acidic residues: residues Ser202–Lys220 and His237–Leu253. Residues Ser217–Thr227 constitute a DNA-binding region (a.T hook 2). Lys239 is subject to N6-acetyllysine. Positions Arg301–Thr309 form a DNA-binding region, a.T hook 3. Residues Glu323–Val347 show a composition bias toward basic and acidic residues. Lys373 is modified (N6-acetyllysine). Positions Ser445–Leu585 are disordered. A compositionally biased stretch (low complexity) spans Ser452–Gln491. The residue at position 518 (Ser518) is a Phosphoserine. Over residues Leu546–Ser559 the composition is skewed to low complexity. Residues Ser560–Gln573 show a composition bias toward pro residues. Lys636 is subject to N6-acetyllysine. Phosphoserine is present on Ser680. Disordered stretches follow at residues Glu713–Leu780, Phe798–Thr949, Glu1038–Pro1066, and Ser1106–Asp1166. Residues Thr716–Ser732 are compositionally biased toward polar residues. Over residues Leu762–Leu780 the composition is skewed to low complexity. Over residues Phe798–Glu808 the composition is skewed to polar residues. Over residues Thr820–Pro841 the composition is skewed to low complexity. Position 840 is a phosphothreonine (Thr840). The segment covering Glu846 to Lys890 has biased composition (basic and acidic residues). A phosphoserine mark is found at Ser926 and Ser1056. Polar residues predominate over residues Leu1043–Ser1062. At Lys1130 the chain carries N6-acetyllysine. Residues Lys1147–Gln1195 form a CXXC-type zinc finger. Residues Cys1155, Cys1158, Cys1161, Cys1167, Cys1170, Cys1173, Cys1189, and Cys1194 each contribute to the Zn(2+) site. The segment at Met1200–Gly1375 is disordered. The segment covering Ser1220 to Ser1232 has biased composition (basic and acidic residues). Low complexity predominate over residues Val1233–Lys1243. Lys1235 is subject to N6-acetyllysine. Residues Ala1248–Glu1273 show a composition bias toward basic and acidic residues. A compositionally biased stretch (polar residues) spans Lys1284–Gln1300. Pro residues predominate over residues Val1304 to Gly1313. 3 consecutive PHD-type zinc fingers follow at residues Arg1431–Cys1482, Cys1479–Cys1533, and Gly1566–Arg1627. Residues Lys1584–Glu1600 are interaction with histone H3K4me3. In terms of domain architecture, Bromo spans Ala1635–Val1765. Disordered stretches follow at residues Tyr1663 to Arg1713 and Gln1806 to Asp1869. Residues Ala1826 to Pro1847 show a composition bias toward pro residues. Ser1837 carries the phosphoserine modification. A Phosphothreonine modification is found at Thr1845. Ser1858 is subject to Phosphoserine. The segment at Asn1870 to Val1910 adopts a C2HC pre-PHD-type zinc-finger fold. The segment at Leu1931–Arg1978 adopts a PHD-type 4 zinc-finger fold. The region spanning Asn2018–Cys2074 is the FYR N-terminal domain. Disordered regions lie at residues Pro2081–Ser2133, Ile2145–Thr2232, Asn2275–Pro2333, Arg2373–Leu2460, Gly2475–Arg2618, Phe2647–Asp2675, and Lys2713–Leu2821. Polar residues predominate over residues Ile2095–Glu2115. Ser2098 bears the Phosphoserine mark. A Phosphothreonine modification is found at Thr2147. Phosphoserine occurs at positions 2151 and 2201. Positions Arg2214 to Thr2232 are enriched in polar residues. Over residues Ser2283–Ser2302 the composition is skewed to low complexity. Polar residues-rich tracts occupy residues Val2310–Ser2319 and Gly2406–Ser2421. A compositionally biased stretch (basic and acidic residues) spans Ser2432 to Ser2442. Thr2525 bears the Phosphothreonine mark. Lys2528 participates in a covalent cross-link: Glycyl lysine isopeptide (Lys-Gly) (interchain with G-Cter in SUMO2). Polar residues-rich tracts occupy residues Ser2543 to Glu2563 and Pro2573 to Pro2592. Ser2611 bears the Phosphoserine mark. Polar residues predominate over residues Ser2726–Pro2741. Positions Asn2744 to Asn2782 are enriched in basic and acidic residues. The span at His2784 to Asp2795 shows a compositional bias: polar residues. Ser2796 is subject to Phosphoserine. Over residues Ser2796–Glu2805 the composition is skewed to low complexity. The span at Thr2812–Leu2821 shows a compositional bias: polar residues. Residues Ser2847 to Lys2855 carry the 9aaTAD motif. Ser2955 carries the phosphoserine modification. Lys2958 is modified (N6-acetyllysine). Disordered regions lie at residues Thr2961–Val3064 and Pro3166–Ala3244. Polar residues-rich tracts occupy residues Thr2963 to Ser2972 and His3016 to Gly3030. Ser3036 carries the phosphoserine modification. Residues Val3039–Val3064 are compositionally biased toward polar residues. Over residues Ser3171–Ser3182 the composition is skewed to low complexity. Residues Val3198–Ser3216 show a composition bias toward polar residues. The segment covering Leu3218 to Lys3233 has biased composition (basic residues). Thr3372 is subject to Phosphothreonine. Lys3462 carries the N6-acetyllysine modification. 2 disordered regions span residues Gly3464 to Ala3608 and Thr3620 to Ser3643. Residues Ser3476–Ala3489 show a composition bias toward polar residues. The span at Ser3508–Ser3529 shows a compositional bias: low complexity. 3 positions are modified to phosphoserine: Ser3511, Ser3515, and Ser3527. A compositionally biased stretch (polar residues) spans Gln3591 to Glu3603. Positions Lys3666–Phe3747 constitute an FYR C-terminal domain. The short motif at Gly3762–Glu3767 is the WDR5 interaction motif (WIN) element. A disordered region spans residues His3785–Arg3808. Residues Glu3829–Lys3945 form the SET domain. His3839 and Arg3841 together coordinate S-adenosyl-L-methionine. At Cys3882 the chain carries S-methylcysteine; by autocatalysis. S-adenosyl-L-methionine is bound by residues Tyr3883 and Asn3906–His3907. Positions 3909 and 3957 each coordinate Zn(2+). Residues Asn3953–Asn3969 enclose the Post-SET domain. Position 3958 (Asn3958) interacts with S-adenosyl-L-methionine. 2 residues coordinate Zn(2+): Cys3959 and Cys3964.

It belongs to the class V-like SAM-binding methyltransferase superfamily. Histone-lysine methyltransferase family. TRX/MLL subfamily. MLL cleavage product N320 heterodimerizes with MLL cleavage product C180 (via SET and FYRC domains). Component of some MLL1/MLL complex, at least composed of the core components KMT2A/MLL1, ASH2L, HCFC1/HCF1, HCFC2, WDR5, DPY30 and RBBP5, as well as the facultative components BACC1, CHD8, E2F6, HSP70, INO80C, KANSL1, LAS1L, MAX, MCRS1, MEN1, MGA, KAT8/MOF, PELP1, PHF20, PRP31, RING2, RUVB1/TIP49A, RUVB2/TIP49B, SENP3, TAF1, TAF4, TAF6, TAF7, TAF9 and TEX10. Forms a core complex with the evolutionary conserved subcomplex WRAD composed of WDR5, RBBP5, ASH2L/ASH2 and DPY30 subunits; WRAD differentially stimulates the methyltransferase activity. Interacts (via WIN motif) with WDR5; the interaction is direct. Interaction with WDR5 is required for stable interaction with ASH2L and RBBP5, and thereby also for optimal histone methyltransferase activity. Interacts with KAT8/MOF; the interaction is direct. Interacts with SBF1 and PPP1R15A. Interacts with ZNF335. Interacts with CLOCK and BMAL1 in a circadian manner. Interacts with PPIE; this results in decreased histone H3 methyltransferase activity. Interacts with CREBBP. Interacts with the WRAD complex composed of WDR5, RBBP5, ASH2L and DPY30. Interacts (via MBM motif) with MEN1. Interacts (via IBM motifs) with PSIP1 (via IBD domain) with moderate affinity whereas the KMT2A-MEN1 complex interacts with a greater affinity; MEN1 enhances interaction of KMT2A with PSIP1. Phosphorylation increases its affinity for PSIP1. Forms a complex with CREBBP and CREB1. In terms of assembly, (Microbial infection) Interacts with herpes virus 8/HHV-8 protein LANA1; this interaction regulates the MLL1 histone methyltransferase activity on viral DNA. Post-translationally, proteolytic cleavage by TASP1 generates MLL cleavage product N320 and MLL cleavage product C180, which reassemble through a non-covalent association. 2 cleavage sites exist, cleavage site 1 (CS1) and cleavage site 2 (CS2), to generate MLL cleavage products N320 and C180. CS2 is the major site. Phosphorylation increases its interaction with PSIP1. In terms of processing, auto-methylated at Cys-3882: auto-methylation is inhibited by the WRAD complex and unmodified histone H3. As to expression, heart, lung, brain and T- and B-lymphocytes.

It localises to the nucleus. The enzyme catalyses L-lysyl(4)-[histone H3] + S-adenosyl-L-methionine = N(6)-methyl-L-lysyl(4)-[histone H3] + S-adenosyl-L-homocysteine + H(+). It catalyses the reaction N(6)-methyl-L-lysyl(4)-[histone H3] + S-adenosyl-L-methionine = N(6),N(6)-dimethyl-L-lysyl(4)-[histone H3] + S-adenosyl-L-homocysteine + H(+). The catalysed reaction is L-cysteinyl-[protein] + S-adenosyl-L-methionine = S-methyl-L-cysteinyl-[protein] + S-adenosyl-L-homocysteine + H(+). Its function is as follows. Histone methyltransferase that plays an essential role in early development and hematopoiesis. Catalytic subunit of the MLL1/MLL complex, a multiprotein complex that mediates both methylation of 'Lys-4' of histone H3 (H3K4me) complex and acetylation of 'Lys-16' of histone H4 (H4K16ac). Catalyzes methyl group transfer from S-adenosyl-L-methionine to the epsilon-amino group of 'Lys-4' of histone H3 (H3K4) via a non-processive mechanism. Part of chromatin remodeling machinery predominantly forms H3K4me1 and H3K4me2 methylation marks at active chromatin sites where transcription and DNA repair take place. Has weak methyltransferase activity by itself, and requires other component of the MLL1/MLL complex to obtain full methyltransferase activity. Has no activity toward histone H3 phosphorylated on 'Thr-3', less activity toward H3 dimethylated on 'Arg-8' or 'Lys-9', while it has higher activity toward H3 acetylated on 'Lys-9'. Binds to unmethylated CpG elements in the promoter of target genes and helps maintain them in the nonmethylated state. Required for transcriptional activation of HOXA9. Promotes PPP1R15A-induced apoptosis. Plays a critical role in the control of circadian gene expression and is essential for the transcriptional activation mediated by the CLOCK-BMAL1 heterodimer. Establishes a permissive chromatin state for circadian transcription by mediating a rhythmic methylation of 'Lys-4' of histone H3 (H3K4me) and this histone modification directs the circadian acetylation at H3K9 and H3K14 allowing the recruitment of CLOCK-BMAL1 to chromatin. Also has auto-methylation activity on Cys-3882 in absence of histone H3 substrate. In Homo sapiens (Human), this protein is Histone-lysine N-methyltransferase 2A (KMT2A).